Reading from the N-terminus, the 524-residue chain is Probable serine/threonine-protein kinase WNK10 (524 aa).

Residues 16–273 (IRYNDVLGRG…ALELLKDQLL (258 aa)) enclose the Protein kinase domain. ATP is bound by residues 96–99 (TELF) and Lys146. Asp163 acts as the Proton acceptor in catalysis. Ser477 carries the post-translational modification Phosphoserine. Residues 480 to 523 (SNKQSEDLKTELNVIESQYNQSCQRLLRMKEEAIEKAKRKWMKL) adopt a coiled-coil conformation.

This sequence belongs to the protein kinase superfamily. Ser/Thr protein kinase family. WNK subfamily.

The catalysed reaction is L-seryl-[protein] + ATP = O-phospho-L-seryl-[protein] + ADP + H(+). It catalyses the reaction L-threonyl-[protein] + ATP = O-phospho-L-threonyl-[protein] + ADP + H(+). Its function is as follows. May regulate flowering time by modulating the photoperiod pathway. The polypeptide is Probable serine/threonine-protein kinase WNK10 (WNK10) (Arabidopsis thaliana (Mouse-ear cress)).